Reading from the N-terminus, the 195-residue chain is MRLILFGGPGSGKGTQAAILTTLLGIPHISTGDILRAERAAGTLLGQQAQSYMDRGELVPDQVIVDMVANRLQQPDTAAGWLLDGFPRNGAQAAVFEEMLKSIHQDYDYLLFLDVPAAILQERALNRAKQAVNGQQRSDDTPETILKRLQVYERETLPMIQQYMSHPKFVPIDGTRTIEEVTAAIQARIGEVNRV.

10–15 (GSGKGT) contributes to the ATP binding site. Positions 30-59 (STGDILRAERAAGTLLGQQAQSYMDRGELV) are NMP. Residues T31, R36, 57–59 (ELV), 85–88 (GFPR), and Q92 each bind AMP. An LID region spans residues 126–140 (NRAKQAVNGQQRSDD). Residue R127 coordinates ATP. AMP is bound by residues R137 and R148. R176 is an ATP binding site.

The protein belongs to the adenylate kinase family. As to quaternary structure, monomer.

It is found in the cytoplasm. It catalyses the reaction AMP + ATP = 2 ADP. It functions in the pathway purine metabolism; AMP biosynthesis via salvage pathway; AMP from ADP: step 1/1. In terms of biological role, catalyzes the reversible transfer of the terminal phosphate group between ATP and AMP. Plays an important role in cellular energy homeostasis and in adenine nucleotide metabolism. The chain is Adenylate kinase from Thermosynechococcus vestitus (strain NIES-2133 / IAM M-273 / BP-1).